Here is a 177-residue protein sequence, read N- to C-terminus: Large ribosomal subunit protein uL6 (177 aa).

Belongs to the universal ribosomal protein uL6 family. Part of the 50S ribosomal subunit.

This protein binds to the 23S rRNA, and is important in its secondary structure. It is located near the subunit interface in the base of the L7/L12 stalk, and near the tRNA binding site of the peptidyltransferase center. The chain is Large ribosomal subunit protein uL6 from Paracoccus denitrificans (strain Pd 1222).